A 372-amino-acid chain; its full sequence is Alanine dehydrogenase (372 aa).

Positions 15 and 75 each coordinate substrate. The active-site Proton donor/acceptor is histidine 96. NAD(+)-binding positions include serine 134, 178-179, aspartate 198, serine 220, 239-240, 266-269, arginine 279, and 298-301; these read TA, VL, IAID, and VANM. Aspartate 269 (proton donor/acceptor) is an active-site residue.

The protein belongs to the AlaDH/PNT family. Homohexamer.

The protein resides in the cytoplasm. It carries out the reaction L-alanine + NAD(+) + H2O = pyruvate + NH4(+) + NADH + H(+). It participates in amino-acid degradation; L-alanine degradation via dehydrogenase pathway; NH(3) and pyruvate from L-alanine: step 1/1. Functionally, catalyzes the reversible reductive amination of pyruvate to L-alanine. A key factor in the assimilation of L-alanine as an energy source via the tricarboxylic acid cycle during sporulation. The protein is Alanine dehydrogenase (ald) of Geobacillus stearothermophilus (Bacillus stearothermophilus).